Reading from the N-terminus, the 291-residue chain is Pyridoxal 5'-phosphate synthase subunit PdxS (291 aa).

Residue aspartate 23 participates in D-ribose 5-phosphate binding. Lysine 80 functions as the Schiff-base intermediate with D-ribose 5-phosphate in the catalytic mechanism. Glycine 152 is a binding site for D-ribose 5-phosphate. Arginine 164 contacts D-glyceraldehyde 3-phosphate. D-ribose 5-phosphate is bound by residues glycine 213 and 234–235 (GS).

It belongs to the PdxS/SNZ family. In terms of assembly, in the presence of PdxT, forms a dodecamer of heterodimers.

The catalysed reaction is aldehydo-D-ribose 5-phosphate + D-glyceraldehyde 3-phosphate + L-glutamine = pyridoxal 5'-phosphate + L-glutamate + phosphate + 3 H2O + H(+). Its pathway is cofactor biosynthesis; pyridoxal 5'-phosphate biosynthesis. In terms of biological role, catalyzes the formation of pyridoxal 5'-phosphate from ribose 5-phosphate (RBP), glyceraldehyde 3-phosphate (G3P) and ammonia. The ammonia is provided by the PdxT subunit. Can also use ribulose 5-phosphate and dihydroxyacetone phosphate as substrates, resulting from enzyme-catalyzed isomerization of RBP and G3P, respectively. The protein is Pyridoxal 5'-phosphate synthase subunit PdxS of Clostridium acetobutylicum (strain ATCC 824 / DSM 792 / JCM 1419 / IAM 19013 / LMG 5710 / NBRC 13948 / NRRL B-527 / VKM B-1787 / 2291 / W).